A 232-amino-acid chain; its full sequence is Zinc finger protein RTS2 (232 aa).

The C2H2-type zinc-finger motif lies at 24-48 (YYCQICQRQCKDANGFQSHNKSPSH). Disordered regions lie at residues 180–199 (AKRQ…ISGD) and 211–232 (GNGR…IKFR).

It localises to the nucleus. This chain is Zinc finger protein RTS2 (RTS2), found in Saccharomyces cerevisiae (strain ATCC 204508 / S288c) (Baker's yeast).